We begin with the raw amino-acid sequence, 97 residues long: Putative septation protein SpoVG (97 aa).

It belongs to the SpoVG family.

In terms of biological role, essential for sporulation. Interferes with or is a negative regulator of the pathway leading to asymmetric septation. The sequence is that of Putative septation protein SpoVG from Bacillus cereus (strain 03BB102).